The chain runs to 444 residues: MRLSRYFLPILRETPKEAEIVSHRLMLRAGMIRQEAAGIYAWLPLGLRVLNRVVEVIRAEQDRSGAIELLMPTIQSAELWRESGRYEAYGKEMLRIRDRHEREMLFGPTNEEMITAIFRSAVRSYKDLPKSLYHIQWKFRDEVRPRFGTMRSREFLMKDAYSFDLDEAGARHAYNKMFVAYLRTFARLGLKAIPMRAETGPIGGNLSHEFIILAQTGESEVYCDRAYLDFPIPPGSTDFDDVAALQATVDHWTSRYAATSEMHEPERFAAVPEEARMAARGIEVGHIFYFGTKYSEPMGARVTGPDGQERPVHMGSYGIGPSRLVAAIIEASHDEAGIVWPDAVAPFDVGLLNLKTGDIATDAACARIQEQLEAAGLSVLYDDRDERPGAKFATADLIGLPWQVIVGPKGLAEGQVELKRRATGERETVAPDALAARLRRGAAG.

The protein belongs to the class-II aminoacyl-tRNA synthetase family. ProS type 2 subfamily. In terms of assembly, homodimer.

The protein localises to the cytoplasm. It catalyses the reaction tRNA(Pro) + L-proline + ATP = L-prolyl-tRNA(Pro) + AMP + diphosphate. Functionally, catalyzes the attachment of proline to tRNA(Pro) in a two-step reaction: proline is first activated by ATP to form Pro-AMP and then transferred to the acceptor end of tRNA(Pro). This Methylobacterium sp. (strain 4-46) protein is Proline--tRNA ligase.